A 171-amino-acid polypeptide reads, in one-letter code: Ribosome maturation factor RimM (171 aa).

A PRC barrel domain is found at 96 to 170 (AEGEYYYHEI…LVTIHVMEGL (75 aa)).

This sequence belongs to the RimM family. As to quaternary structure, binds ribosomal protein uS19.

It is found in the cytoplasm. In terms of biological role, an accessory protein needed during the final step in the assembly of 30S ribosomal subunit, possibly for assembly of the head region. Essential for efficient processing of 16S rRNA. May be needed both before and after RbfA during the maturation of 16S rRNA. It has affinity for free ribosomal 30S subunits but not for 70S ribosomes. In Bacillus cereus (strain G9842), this protein is Ribosome maturation factor RimM.